The primary structure comprises 915 residues: Isoleucine--tRNA ligase (915 aa).

The short motif at 64 to 74 is the 'HIGH' region element; that stretch reads PYANGNFHVGH. Glu-557 lines the L-isoleucyl-5'-AMP pocket. Residues 598 to 602 carry the 'KMSKS' region motif; it reads AMSKS. Residue Lys-601 coordinates ATP. Residues Cys-887, Cys-890, Cys-902, and Cys-905 each contribute to the Zn(2+) site.

The protein belongs to the class-I aminoacyl-tRNA synthetase family. IleS type 1 subfamily. As to quaternary structure, monomer. Zn(2+) is required as a cofactor.

It localises to the cytoplasm. The enzyme catalyses tRNA(Ile) + L-isoleucine + ATP = L-isoleucyl-tRNA(Ile) + AMP + diphosphate. Its function is as follows. Catalyzes the attachment of isoleucine to tRNA(Ile). As IleRS can inadvertently accommodate and process structurally similar amino acids such as valine, to avoid such errors it has two additional distinct tRNA(Ile)-dependent editing activities. One activity is designated as 'pretransfer' editing and involves the hydrolysis of activated Val-AMP. The other activity is designated 'posttransfer' editing and involves deacylation of mischarged Val-tRNA(Ile). This Leptospira biflexa serovar Patoc (strain Patoc 1 / ATCC 23582 / Paris) protein is Isoleucine--tRNA ligase.